The sequence spans 567 residues: Oxygen-dependent choline dehydrogenase (567 aa).

4–33 (DYIIIGAGSAGNVLAARLTEDADVTVLLLE) provides a ligand contact to FAD. The active-site Proton acceptor is the H473.

Belongs to the GMC oxidoreductase family. FAD is required as a cofactor.

It catalyses the reaction choline + A = betaine aldehyde + AH2. The catalysed reaction is betaine aldehyde + NAD(+) + H2O = glycine betaine + NADH + 2 H(+). It participates in amine and polyamine biosynthesis; betaine biosynthesis via choline pathway; betaine aldehyde from choline (cytochrome c reductase route): step 1/1. In terms of biological role, involved in the biosynthesis of the osmoprotectant glycine betaine. Catalyzes the oxidation of choline to betaine aldehyde and betaine aldehyde to glycine betaine at the same rate. The sequence is that of Oxygen-dependent choline dehydrogenase from Yersinia pseudotuberculosis serotype IB (strain PB1/+).